The primary structure comprises 152 residues: Transcriptional regulator MraZ (152 aa).

SpoVT-AbrB domains lie at 5–52 (ASAI…PIQE) and 81–124 (AHEC…DEAA).

The protein belongs to the MraZ family. In terms of assembly, forms oligomers.

The protein localises to the cytoplasm. It is found in the nucleoid. This Shewanella halifaxensis (strain HAW-EB4) protein is Transcriptional regulator MraZ.